The sequence spans 86 residues: Large ribosomal subunit protein bL27 (86 aa).

Positions Met1 to Thr10 are enriched in gly residues. Residues Met1–Leu21 form a disordered region.

The protein belongs to the bacterial ribosomal protein bL27 family.

The chain is Large ribosomal subunit protein bL27 from Cupriavidus taiwanensis (strain DSM 17343 / BCRC 17206 / CCUG 44338 / CIP 107171 / LMG 19424 / R1) (Ralstonia taiwanensis (strain LMG 19424)).